The following is a 340-amino-acid chain: Fructoselysine 6-phosphate deglycase (340 aa).

SIS domains follow at residues 35 to 169 and 201 to 331; these read IVEE…RLAP and LGEL…PDER.

As to quaternary structure, homododecamer.

The enzyme catalyses N(6)-(6-phospho-D-fructosyl)-L-lysine + H2O = D-glucose 6-phosphate + L-lysine. The protein operates within carbohydrate metabolism; fructoselysine degradation; D-glucose 6-phosphate and lysine from fructoselysine: step 2/2. Its activity is regulated as follows. Strongly inhibited by ZnCl(2). In terms of biological role, catalyzes the reversible conversion of fructoselysine 6-phosphate to glucose 6-phosphate and lysine. Functions in a fructoselysine degradation pathway that allows E.coli to grow on fructoselysine or psicoselysine. The protein is Fructoselysine 6-phosphate deglycase of Escherichia coli (strain K12).